The sequence spans 351 residues: Probable galacturonosyltransferase-like 4 (351 aa).

The Cytoplasmic segment spans residues 1 to 8 (MASRSLSY). A helical; Signal-anchor for type II membrane protein membrane pass occupies residues 9-29 (TQLLGLLSFILLLVTTTTMAV). Topologically, residues 30-351 (RVGVILHKPS…YRSSRHSLEE (322 aa)) are lumenal. N-linked (GlcNAc...) asparagine glycans are attached at residues N96 and N203.

It belongs to the glycosyltransferase 8 family.

It is found in the golgi apparatus membrane. The protein operates within glycan metabolism; pectin biosynthesis. Its function is as follows. May be involved in pectin and/or xylans biosynthesis in cell walls. This is Probable galacturonosyltransferase-like 4 (GATL4) from Arabidopsis thaliana (Mouse-ear cress).